The chain runs to 470 residues: Solute carrier family 7 member 13 (470 aa).

Residues 1-11 (MDRGEKIQLKR) lie on the Cytoplasmic side of the membrane. The chain crosses the membrane as a helical span at residues 12 to 32 (VFGYWWGTSFLLINIIGAGIF). Residues 33-45 (VSPKGVLAYSCMN) lie on the Extracellular side of the membrane. Residues 46–66 (VGVSLCVWAGCAILAMTSTLC) traverse the membrane as a helical segment. The Cytoplasmic segment spans residues 67–87 (SAEISISFPCSGAQYYFLKRY). The helical transmembrane segment at 88 to 108 (FGSTVAFLNLWTSLFLGSGVV) threads the bilayer. Topologically, residues 109 to 128 (AGQALLLAEYSIQPFFPSCS) are extracellular. Residues 129-149 (VPKLPKKCLALAMLWIVGILT) traverse the membrane as a helical segment. Residues 150–162 (SRGVKEVTWLQIA) lie on the Cytoplasmic side of the membrane. A helical transmembrane segment spans residues 163–183 (SSVLKVSILSFISLTGVVFLI). Over 184–206 (RGKKENVERFQNAFDAELPDISH) the chain is Extracellular. Residues 207-227 (LIQAIFQGYFAYSGGACFTLI) traverse the membrane as a helical segment. The Cytoplasmic segment spans residues 228–240 (AGELKKPRTTIPK). A helical membrane pass occupies residues 241–261 (CIFTALPLVTVVYLLVNISYL). Residues 262–287 (TVLTPREILSSDAVAITWADRAFPSL) are Extracellular-facing. Residues 288-308 (AWIMPFAISTSLFSNLLISIF) form a helical membrane-spanning segment. The Cytoplasmic segment spans residues 309 to 336 (KSSRPIYLASQEGQLPLLFNTLNSHSSP). The helical transmembrane segment at 337-357 (FTAVLLLVTLGSLAIILTSLI) threads the bilayer. Residue aspartate 358 is a topological domain, extracellular. A helical transmembrane segment spans residues 359–379 (LINYIFFTGSLWSILLMIGIL). Topologically, residues 380–393 (RRRYQEPNLSIPYK) are cytoplasmic. The helical transmembrane segment at 394-414 (VFLSFPLATIVIDVGLVVIPL) threads the bilayer. The Extracellular portion of the chain corresponds to 415 to 421 (VKSPNVH). The chain crosses the membrane as a helical span at residues 422-442 (YVYVLLLVLSGLLFYIPLIHF). At 443–470 (KIRLAWFEKMTCYLQLLFNICLPDVSEE) the chain is on the cytoplasmic side.

Belongs to the amino acid-polyamine-organocation (APC) superfamily. As to quaternary structure, disulfide-linked heterodimer composed of the catalytic light subunit SLC7A13 and the heavy subunit SLC3A1. In terms of tissue distribution, expressed in the kidney.

Its subcellular location is the apical cell membrane. The catalysed reaction is L-cystine(out) + L-aspartate(in) = L-cystine(in) + L-aspartate(out). It catalyses the reaction L-cystine(out) = L-cystine(in). It carries out the reaction L-aspartate(in) + L-glutamate(out) = L-aspartate(out) + L-glutamate(in). The enzyme catalyses L-aspartate(in) + L-glutamine(out) = L-aspartate(out) + L-glutamine(in). The catalysed reaction is L-aspartate(in) + L-methionine(out) = L-aspartate(out) + L-methionine(in). It catalyses the reaction L-leucine(out) + L-aspartate(in) = L-leucine(in) + L-aspartate(out). It carries out the reaction L-valine(out) + L-aspartate(in) = L-valine(in) + L-aspartate(out). The enzyme catalyses L-aspartate(in) + L-phenylalanine(out) = L-aspartate(out) + L-phenylalanine(in). The catalysed reaction is L-tyrosine(out) + L-aspartate(in) = L-tyrosine(in) + L-aspartate(out). It catalyses the reaction L-tryptophan(out) + L-aspartate(in) = L-tryptophan(in) + L-aspartate(out). In terms of biological role, associates with SLC3A1/rBAT to form a functional heterodimeric complex that transports anionic and neutral amino acids across the apical plasma membrane of renal epithelium. Preferentially mediates exchange transport, but can also operate via facilitated diffusion. May act as a major transporter for L-cystine in late proximal tubules, ensuring its reabsorption from the luminal fluid in exchange for cytosolic L-glutamate or L-aspartate. This chain is Solute carrier family 7 member 13 (SLC7A13), found in Homo sapiens (Human).